Consider the following 168-residue polypeptide: Ribosome maturation factor RimM (168 aa).

Positions 92-166 (EDTFYKADLI…RITVDPIEGM (75 aa)) constitute a PRC barrel domain.

It belongs to the RimM family. Binds ribosomal protein uS19.

Its subcellular location is the cytoplasm. Functionally, an accessory protein needed during the final step in the assembly of 30S ribosomal subunit, possibly for assembly of the head region. Essential for efficient processing of 16S rRNA. May be needed both before and after RbfA during the maturation of 16S rRNA. It has affinity for free ribosomal 30S subunits but not for 70S ribosomes. The protein is Ribosome maturation factor RimM of Alkaliphilus metalliredigens (strain QYMF).